The sequence spans 69 residues: Cytoinsectotoxin-2a (69 aa).

Belongs to the cationic peptide 06 (cytoinsectotoxin) family. In terms of tissue distribution, expressed by the venom gland.

It localises to the secreted. Insecticidal and antimicrobial peptide. Has insecticidal activity against larvae of flesh fly S.carnaria. Has antibacterial activity against Gram-positive bacterium B.subtilis B-501 (MIC=1.25 uM) and Gram-negative bacterium E.coli DH5alpha (MIC=2.5 uM). This chain is Cytoinsectotoxin-2a, found in Lachesana tarabaevi (Spider).